Here is a 136-residue protein sequence, read N- to C-terminus: Nucleoside diphosphate kinase (136 aa).

ATP contacts are provided by K10, F58, R86, T92, R104, and N114. H117 serves as the catalytic Pros-phosphohistidine intermediate.

Belongs to the NDK family. As to quaternary structure, homotetramer. It depends on Mg(2+) as a cofactor.

Its subcellular location is the cytoplasm. It carries out the reaction a 2'-deoxyribonucleoside 5'-diphosphate + ATP = a 2'-deoxyribonucleoside 5'-triphosphate + ADP. The enzyme catalyses a ribonucleoside 5'-diphosphate + ATP = a ribonucleoside 5'-triphosphate + ADP. In terms of biological role, major role in the synthesis of nucleoside triphosphates other than ATP. The ATP gamma phosphate is transferred to the NDP beta phosphate via a ping-pong mechanism, using a phosphorylated active-site intermediate. This is Nucleoside diphosphate kinase from Mycobacterium marinum (strain ATCC BAA-535 / M).